Consider the following 692-residue polypeptide: Paramyosin (692 aa).

The interval 1–15 (MNKKRDSELAKLRKL) is nonhelical region. Residues 16–692 (LEDVHIESEE…DHRVKELLLQ (677 aa)) adopt a coiled-coil conformation. Residues 26–57 (TAHHLRQKHQAAIQEMQDQLDQLQKAKNKSDK) form a disordered region.

It belongs to the paramyosin family. As to quaternary structure, homodimer.

Its subcellular location is the cytoplasm. It is found in the myofibril. Paramyosin is a major structural component of many thick filaments isolated from invertebrate muscles. In Dermatophagoides farinae (American house dust mite), this protein is Paramyosin.